Reading from the N-terminus, the 377-residue chain is MAAPLLGSPGLQVLSMSSRTGKLFTPSSRSFCSRATSSRPLNAQRLAEKLRAQKQEQKTKEMRVPTNPVQRRVQELVRFTQQLQRVHPNVLAKELSRRILHQDKDLVVINKPYGLPVHGGPGVQLCISDVLPILAKMLHGHKAEPLHLCHRLDKETTGVMVLAWEKDMAHQVQELFRTRQVEKKYWAITVRVPLPSAGVVDIPIMEKEVAGQQQHHKMTLRPSYRMDNGKMVKVRASRDAHVAVTQYQVLSSTPSSALVELQPVTGIKHQLRVHLAFGLDCPILGDHKYSDWNRLAPQKLSAGTLKKLGLQQSKARYIPLHLHARQLILPALGSRTEELLLACKLPHFFARSLRRLGLDMPNEDQSRSHEARHVEAR.

The transit peptide at 1-35 directs the protein to the mitochondrion; that stretch reads MAAPLLGSPGLQVLSMSSRTGKLFTPSSRSFCSRA. Residue aspartate 153 is part of the active site.

This sequence belongs to the pseudouridine synthase RluA family. As to quaternary structure, interacts with 16S mt-rRNA, mt-tRNA(Phe) and mt-tRNA(Met). Forms a regulatory protein-RNA complex, consisting of RCC1L, NGRN, RPUSD3, RPUSD4, TRUB2, FASTKD2 and 16S mt-rRNA.

The protein localises to the mitochondrion matrix. Its subcellular location is the nucleus. The protein resides in the cytoplasm. It carries out the reaction uridine in 5S rRNA = pseudouridine in 5S rRNA. The enzyme catalyses a uridine in tRNA = a pseudouridine in tRNA. It catalyses the reaction a uridine in mRNA = a pseudouridine in mRNA. Functionally, catalyzes uridine to pseudouridine isomerization (pseudouridylation) of different mitochondrial RNA substrates. Acts on position 1397 in 16S mitochondrial ribosomal RNA (16S mt-rRNA). This modification is required for the assembly of 16S mt-rRNA into a functional mitochondrial ribosome. As a component of a functional protein-RNA module, consisting of RCC1L, NGRN, RPUSD3, RPUSD4, TRUB2, FASTKD2 and 16S mt-rRNA, controls 16S mt-rRNA abundance and is required for intra-mitochondrial translation. Acts on position 39 in mitochondrial tRNA(Phe). Also catalyzes pseudouridylation of mRNAs in nucleus: acts as a regulator of pre-mRNA splicing by mediating pseudouridylation of pre-mRNAs at locations associated with alternatively spliced regions. Pseudouridylation of pre-mRNAs near splice sites directly regulates mRNA splicing and mRNA 3'-end processing. The protein is Pseudouridylate synthase RPUSD4, mitochondrial of Rattus norvegicus (Rat).